The sequence spans 541 residues: Putative nucleobase-ascorbate transporter 10 (541 aa).

The next 12 membrane-spanning stretches (helical) occupy residues 52–72 (LLSL…MGGG), 79–99 (VIQT…FFGT), 101–121 (LPVI…IIYS), 141–161 (IQGA…LGVW), 173–193 (IAPL…PLLA), 196–216 (VEVG…LPRF), 235–255 (GMIL…SSGV), 299–319 (SFAM…LFYA), 376–396 (RVIQ…KFGA), 397–417 (FFAS…LCFV), 433–453 (FNIK…PQYF), and 476–496 (VIFM…DCTL).

This sequence belongs to the nucleobase:cation symporter-2 (NCS2) (TC 2.A.40) family.

The protein localises to the membrane. The protein is Putative nucleobase-ascorbate transporter 10 (NAT10) of Arabidopsis thaliana (Mouse-ear cress).